The following is a 429-amino-acid chain: MEIVCEDFQKVLTKIKLLRENANIIEETVQRSVREIVQNVRESRDEALFFYTKKFDGVEIKDVRVSEEEIKQASMFVESSFLEALQEAKKNIISYHEKQKRQSMFDCTSKGIIRGQIIRPLENIGVYVPGGTASYPSSVLMNVLPAKLAGVKKIVMVTPPRAGGIDPHILVAASLAGVDEIYMIGGAQAIAALAYGTESIPKVDKIVGPGNLYVALAKREVYGIVNIDMIAGPSEIVVIADETGNAKYIAADLLSQAEHDERATAICITTNIELAKEVEKEIERQLETLPRSEIARESINRNGAIFIVPSIDEALQLSNEIAPEHLELHIKEPMNALAYVKHAGSIFLGPYAPEPLGDYLAGPNHVLPTSGTARFFSPLSVDDFVKKSSFLSYTEEALRDVKHHIVELANKEGLHAHAKAIQIRFGEEE.

The NAD(+) site is built by Tyr127, Gln188, and Asn211. Positions 234, 256, and 259 each coordinate substrate. Residues Gln256 and His259 each contribute to the Zn(2+) site. Residues Glu324 and His325 each act as proton acceptor in the active site. Residues His325, Asp358, Glu412, and His417 each contribute to the substrate site. Residue Asp358 coordinates Zn(2+). Residue His417 coordinates Zn(2+).

This sequence belongs to the histidinol dehydrogenase family. It depends on Zn(2+) as a cofactor.

The enzyme catalyses L-histidinol + 2 NAD(+) + H2O = L-histidine + 2 NADH + 3 H(+). The protein operates within amino-acid biosynthesis; L-histidine biosynthesis; L-histidine from 5-phospho-alpha-D-ribose 1-diphosphate: step 9/9. Functionally, catalyzes the sequential NAD-dependent oxidations of L-histidinol to L-histidinaldehyde and then to L-histidine. This Bacillus thuringiensis subsp. konkukian (strain 97-27) protein is Histidinol dehydrogenase.